A 764-amino-acid polypeptide reads, in one-letter code: Zygote defective protein 12 (764 aa).

The span at 1-20 shows a compositional bias: polar residues; sequence MLDLTNQESDSSENGNSKYA. The tract at residues 1 to 33 is disordered; sequence MLDLTNQESDSSENGNSKYADSTDGRGIGTSRR. The interaction with dli-1 stretch occupies residues 1 to 236; that stretch reads MLDLTNQESD…ESSVITNGNG (236 aa). Residues 43–169 form the Calponin-homology (CH) domain; that stretch reads RKDLADLVFW…VSLAFIGKTQ (127 aa). 2 coiled-coil regions span residues 244–405 and 436–692; these read LSAN…HVKT and GLES…NRLI. Residues 732–752 form a helical membrane-spanning segment; sequence ALPWRFGISSMLIIFMVWFFI.

Belongs to the hook family. Homodimer. Interacts with the dynein subunit dli-1 via its N-terminus. May interact with microtubules.

The protein localises to the nucleus membrane. It is found in the cytoplasm. The protein resides in the cytoskeleton. It localises to the microtubule organizing center. Its subcellular location is the centrosome. Its function is as follows. Cytoskeletal linker protein, which is essential for attachment of the centrosome to the nucleus. Required for dynein localization to the nuclear envelope. This chain is Zygote defective protein 12 (zyg-12), found in Caenorhabditis briggsae.